Consider the following 360-residue polypeptide: Peptide chain release factor 1 (360 aa).

An N5-methylglutamine modification is found at Gln235. Positions 284–312 are disordered; the sequence is ERQAQAQADTRRNLLGSGDRSDKIRTYNY.

It belongs to the prokaryotic/mitochondrial release factor family. Post-translationally, methylated by PrmC. Methylation increases the termination efficiency of RF1.

The protein resides in the cytoplasm. Peptide chain release factor 1 directs the termination of translation in response to the peptide chain termination codons UAG and UAA. This Histophilus somni (strain 129Pt) (Haemophilus somnus) protein is Peptide chain release factor 1.